A 342-amino-acid chain; its full sequence is Phosphoribosylformylglycinamidine cyclo-ligase (342 aa).

Belongs to the AIR synthase family.

It localises to the cytoplasm. It catalyses the reaction 2-formamido-N(1)-(5-O-phospho-beta-D-ribosyl)acetamidine + ATP = 5-amino-1-(5-phospho-beta-D-ribosyl)imidazole + ADP + phosphate + H(+). It participates in purine metabolism; IMP biosynthesis via de novo pathway; 5-amino-1-(5-phospho-D-ribosyl)imidazole from N(2)-formyl-N(1)-(5-phospho-D-ribosyl)glycinamide: step 2/2. This Staphylococcus aureus (strain USA300) protein is Phosphoribosylformylglycinamidine cyclo-ligase.